The following is a 177-amino-acid chain: Bifunctional protein PyrR (177 aa).

A PRPP-binding motif is present at residues 99–111; the sequence is VVLVDDVLFTGRT.

This sequence belongs to the purine/pyrimidine phosphoribosyltransferase family. PyrR subfamily.

The catalysed reaction is UMP + diphosphate = 5-phospho-alpha-D-ribose 1-diphosphate + uracil. Regulates the transcription of the pyrimidine nucleotide (pyr) operon in response to exogenous pyrimidines. Its function is as follows. Also displays a weak uracil phosphoribosyltransferase activity which is not physiologically significant. This chain is Bifunctional protein PyrR, found in Citrifermentans bemidjiense (strain ATCC BAA-1014 / DSM 16622 / JCM 12645 / Bem) (Geobacter bemidjiensis).